Reading from the N-terminus, the 292-residue chain is MSASVKESLQLQLLEMEMLFSMFPNQGEVKLEDVNALTNIKRYLEGTREALPPKIEFVITLQIEEPKVKIDLQVTMPHSYPYVALQLFGRSSELDRHQQLLLNKGLTSYIGTFDPGELCVCAAIQWLQDNSASYFLSRKLVYEPSTQAKPVKNTFLRMWIYSHHIYQQDLRKKILDVGKRLDVTGFCMTGKPGIICVEGFKEHCEEFWHTIRYPNWKHISCKHAESVETEGNGEDLRLFHSFEELLLEAHGDYGLRNDYHMNLGQFLEFLKKHKSEHVFQILFGIESKSSDS.

Residues 14 to 134 enclose the RWD domain; it reads LEMEMLFSMF…QWLQDNSASY (121 aa).

The protein is RWD domain-containing protein 2A (RWDD2A) of Macaca fascicularis (Crab-eating macaque).